The primary structure comprises 365 residues: Fructose-1,6-bisphosphate aldolase/phosphatase (365 aa).

The active-site Proton acceptor; for FBP phosphatase activity is the Asp-11. Mg(2+) contacts are provided by Asp-11, His-18, Asp-52, and Asp-53. Beta-D-fructose 1,6-bisphosphate is bound at residue His-18. His-18 lines the dihydroxyacetone phosphate pocket. Residue Tyr-90 participates in beta-D-fructose 1,6-bisphosphate binding. Residue Gln-94 coordinates Mg(2+). Residue 103 to 104 (GN) participates in beta-D-fructose 1,6-bisphosphate binding. Asp-131 serves as a coordination point for Mg(2+). Lys-132 contacts beta-D-fructose 1,6-bisphosphate. Lys-132 contributes to the dihydroxyacetone phosphate binding site. Tyr-228 acts as the Proton donor/acceptor; for FBP aldolase activity in catalysis. Mg(2+) is bound by residues Lys-231, Asp-232, and Asp-233. Catalysis depends on Lys-231, which acts as the Schiff-base intermediate with DHAP; for FBP aldolase activity. Beta-D-fructose 1,6-bisphosphate-binding positions include 241-242 (QS), Arg-265, Asp-286, and Tyr-347. The dihydroxyacetone phosphate site is built by Arg-265 and Asp-286.

Belongs to the FBP aldolase/phosphatase family. Homooctamer; dimer of tetramers. Mg(2+) serves as cofactor.

It carries out the reaction beta-D-fructose 1,6-bisphosphate + H2O = beta-D-fructose 6-phosphate + phosphate. The catalysed reaction is beta-D-fructose 1,6-bisphosphate = D-glyceraldehyde 3-phosphate + dihydroxyacetone phosphate. The protein operates within carbohydrate biosynthesis; gluconeogenesis. In terms of biological role, catalyzes two subsequent steps in gluconeogenesis: the aldol condensation of dihydroxyacetone phosphate (DHAP) and glyceraldehyde-3-phosphate (GA3P) to fructose-1,6-bisphosphate (FBP), and the dephosphorylation of FBP to fructose-6-phosphate (F6P). This chain is Fructose-1,6-bisphosphate aldolase/phosphatase, found in Methanothermobacter marburgensis (strain ATCC BAA-927 / DSM 2133 / JCM 14651 / NBRC 100331 / OCM 82 / Marburg) (Methanobacterium thermoautotrophicum).